Reading from the N-terminus, the 206-residue chain is Ribosomal RNA small subunit methyltransferase G (206 aa).

Residues Gly-73, Leu-78, 124–125 (VE), and Arg-139 each bind S-adenosyl-L-methionine.

The protein belongs to the methyltransferase superfamily. RNA methyltransferase RsmG family.

It is found in the cytoplasm. The catalysed reaction is guanosine(527) in 16S rRNA + S-adenosyl-L-methionine = N(7)-methylguanosine(527) in 16S rRNA + S-adenosyl-L-homocysteine. Specifically methylates the N7 position of guanine in position 527 of 16S rRNA. The sequence is that of Ribosomal RNA small subunit methyltransferase G from Pectobacterium carotovorum subsp. carotovorum (strain PC1).